The sequence spans 424 residues: Endoglucanase (424 aa).

An N-terminal signal peptide occupies residues 1-19; sequence MHRCMPLVAASMAALMLAG. A lipid anchor (N-palmitoyl cysteine) is attached at cysteine 20. Cysteine 20 carries the S-diacylglycerol cysteine lipid modification. Residues 20–43 constitute a propeptide that is removed on maturation; it reads CGGGDGDTTLSTAAATDTTTLKTA. Glutamate 247 (proton donor) is an active-site residue. Catalysis depends on glutamate 359, which acts as the Nucleophile.

This sequence belongs to the glycosyl hydrolase 5 (cellulase A) family.

It is found in the cell membrane. The catalysed reaction is Endohydrolysis of (1-&gt;4)-beta-D-glucosidic linkages in cellulose, lichenin and cereal beta-D-glucans.. The sequence is that of Endoglucanase (egl) from Ralstonia nicotianae (strain ATCC BAA-1114 / GMI1000) (Ralstonia solanacearum).